We begin with the raw amino-acid sequence, 410 residues long: MTDTAPQNDPTTSHVLPKGIRFAGVAAGIKASGKPDVSLIVTDRPSVMAGVYTTNQIVAAPVVLTRAKTPTSTGRVVLTNSGNANACTGDEGMQNAKTMCDLAAKLADCDSADVMVMSTGVIGKPLPMEKVRAGIEAAAGKLGDAESDFIASADAICTTDQFRKTVSETVTIRGQQFRIAAMCKGAGMIAPNMATMLGVVMTDAPIGPDAAQASLKQIAGRTFNRVSVDGHTSTNDTVMLVCTGMSVSEDAKEFNSDELKIWQEAATQVALKLAKMLVADGEGAARFFEVRVSGAADDGDAFVIAKTVAASPLVKTAITGGDPNWGRIVSAAGYAGPKIEPERTSLVIDGVTVFENGTPLSIDAAKLSESMKANSEVLADLTVGDGPGKASFWASDLTEAYVRFNSLYTT.

Substrate is bound by residues Thr-158, Lys-184, Thr-195, Glu-282, Asn-405, and Thr-410. Residue Thr-195 is the Nucleophile of the active site.

The protein belongs to the ArgJ family. In terms of assembly, heterotetramer of two alpha and two beta chains.

It localises to the cytoplasm. It catalyses the reaction N(2)-acetyl-L-ornithine + L-glutamate = N-acetyl-L-glutamate + L-ornithine. The catalysed reaction is L-glutamate + acetyl-CoA = N-acetyl-L-glutamate + CoA + H(+). The protein operates within amino-acid biosynthesis; L-arginine biosynthesis; L-ornithine and N-acetyl-L-glutamate from L-glutamate and N(2)-acetyl-L-ornithine (cyclic): step 1/1. It participates in amino-acid biosynthesis; L-arginine biosynthesis; N(2)-acetyl-L-ornithine from L-glutamate: step 1/4. Its function is as follows. Catalyzes two activities which are involved in the cyclic version of arginine biosynthesis: the synthesis of N-acetylglutamate from glutamate and acetyl-CoA as the acetyl donor, and of ornithine by transacetylation between N(2)-acetylornithine and glutamate. This Rhodopirellula baltica (strain DSM 10527 / NCIMB 13988 / SH1) protein is Arginine biosynthesis bifunctional protein ArgJ.